We begin with the raw amino-acid sequence, 530 residues long: uncharacterized protein (530 aa).

Transmembrane regions (helical) follow at residues Phe-4–Ile-23, Leu-28–Thr-47, Phe-57–Phe-79, Leu-91–Leu-113, and Val-148–Ala-170. Positions Leu-260–Asp-344 constitute an RCK C-terminal domain. Transmembrane regions (helical) follow at residues Val-352–Leu-374, Thr-379–Leu-398, Leu-419–Thr-441, and Val-451–Leu-473.

Belongs to the AAE transporter (TC 2.A.81) family.

It localises to the cell membrane. This is an uncharacterized protein from Corynebacterium efficiens (strain DSM 44549 / YS-314 / AJ 12310 / JCM 11189 / NBRC 100395).